The chain runs to 318 residues: L-lactate dehydrogenase (318 aa).

NAD(+)-binding positions include V20, D41, K46, Y71, and 85 to 86; that span reads GA. Residues Q88, R94, and 126 to 129 each bind substrate; that span reads NPVD. Residues 124-126 and S149 each bind NAD(+); that span reads ATN. 154-157 contributes to the substrate binding site; that stretch reads DTAR. Beta-D-fructose 1,6-bisphosphate is bound by residues R159 and H174. Catalysis depends on H181, which acts as the Proton acceptor. Y226 bears the Phosphotyrosine mark. A substrate-binding site is contributed by T235.

Belongs to the LDH/MDH superfamily. LDH family. In terms of assembly, homotetramer.

It is found in the cytoplasm. It catalyses the reaction (S)-lactate + NAD(+) = pyruvate + NADH + H(+). It functions in the pathway fermentation; pyruvate fermentation to lactate; (S)-lactate from pyruvate: step 1/1. Allosterically activated by fructose 1,6-bisphosphate (FBP). Functionally, catalyzes the conversion of lactate to pyruvate. The chain is L-lactate dehydrogenase from Priestia megaterium (Bacillus megaterium).